A 331-amino-acid chain; its full sequence is uncharacterized protein (331 aa).

WD repeat units lie at residues 53–92, 97–139, 144–184, and 300–331; these read KAHT…KSAV, QQST…KLIR, AHND…DSTD, and ASEE…AFRV.

The protein localises to the cytoplasm. The protein resides in the nucleus. This is an uncharacterized protein from Schizosaccharomyces pombe (strain 972 / ATCC 24843) (Fission yeast).